The primary structure comprises 316 residues: Malate dehydrogenase 2 (316 aa).

Residues 10–15 and aspartate 34 contribute to the NAD(+) site; that span reads GGGQIG. 2 residues coordinate substrate: arginine 83 and arginine 89. NAD(+)-binding positions include asparagine 96 and 119 to 121; that span reads ISN. Asparagine 121 and arginine 152 together coordinate substrate. Catalysis depends on histidine 176, which acts as the Proton acceptor.

It belongs to the LDH/MDH superfamily. MDH type 3 family.

The enzyme catalyses (S)-malate + NAD(+) = oxaloacetate + NADH + H(+). Functionally, catalyzes the reversible oxidation of malate to oxaloacetate. The protein is Malate dehydrogenase 2 of Anaeromyxobacter dehalogenans (strain 2CP-C).